The following is a 155-amino-acid chain: Large ribosomal subunit protein eL24 (155 aa).

The segment at 119–155 is disordered; sequence VKAAKKAAAPAPAKKSAPKQKAAKVTQKAAPRVGGKR. Over residues 124-133 the composition is skewed to low complexity; the sequence is KAAAPAPAKK.

It belongs to the eukaryotic ribosomal protein eL24 family.

This is Large ribosomal subunit protein eL24 (RpL24) from Drosophila melanogaster (Fruit fly).